The chain runs to 291 residues: 4-diphosphocytidyl-2-C-methyl-D-erythritol kinase (291 aa).

Lys-10 is a catalytic residue. 99 to 109 lines the ATP pocket; that stretch reads PMGGGLGGGSS. Asp-141 is a catalytic residue.

This sequence belongs to the GHMP kinase family. IspE subfamily. In terms of assembly, homodimer.

The enzyme catalyses 4-CDP-2-C-methyl-D-erythritol + ATP = 4-CDP-2-C-methyl-D-erythritol 2-phosphate + ADP + H(+). The protein operates within isoprenoid biosynthesis; isopentenyl diphosphate biosynthesis via DXP pathway; isopentenyl diphosphate from 1-deoxy-D-xylulose 5-phosphate: step 3/6. Its function is as follows. Catalyzes the phosphorylation of the position 2 hydroxy group of 4-diphosphocytidyl-2C-methyl-D-erythritol. This is 4-diphosphocytidyl-2-C-methyl-D-erythritol kinase from Proteus mirabilis (strain HI4320).